Here is a 416-residue protein sequence, read N- to C-terminus: Hemagglutinin-esterase (416 aa).

The first 14 residues, methionine 1–alanine 14, serve as a signal peptide directing secretion. Residues leucine 4–threonine 121 are esterase domain first part. The Virion surface portion of the chain corresponds to valine 15–tyrosine 393. The active-site Nucleophile is the serine 37. A disulfide bridge connects residues cysteine 41 and cysteine 57. 2 N-linked (GlcNAc...) asparagine; by host glycosylation sites follow: asparagine 59 and asparagine 76. Intrachain disulfides connect cysteine 88–cysteine 136, cysteine 108–cysteine 156, cysteine 192–cysteine 273, cysteine 200–cysteine 246, and cysteine 206–cysteine 213. A receptor binding region spans residues serine 122–asparagine 263. Residues asparagine 257, asparagine 278, and asparagine 294 are each glycosylated (N-linked (GlcNAc...) asparagine; by host). The esterase domain second part stretch occupies residues phenylalanine 264–aspartate 379. Cysteine 304 and cysteine 309 are disulfide-bonded. Asparagine 322 carries N-linked (GlcNAc...) asparagine; by host glycosylation. Catalysis depends on histidine 328, which acts as the Charge relay system. A glycan (N-linked (GlcNAc...) asparagine; by host) is linked at asparagine 343. Cysteines 346 and 371 form a disulfide. A helical transmembrane segment spans residues phenylalanine 394–phenylalanine 414. The Intravirion segment spans residues phenylalanine 415–cysteine 416.

The protein belongs to the influenza type C/coronaviruses hemagglutinin-esterase family. Homodimer. N-glycosylated.

The protein resides in the virion membrane. It is found in the host cell membrane. The enzyme catalyses N-acetyl-9-O-acetylneuraminate + H2O = N-acetylneuraminate + acetate + H(+). The catalysed reaction is N-acetyl-4-O-acetylneuraminate + H2O = N-acetylneuraminate + acetate + H(+). In terms of biological role, structural protein that makes short spikes at the surface of the virus. Contains receptor binding and receptor-destroying activities. Mediates de-O-acetylation of N-acetyl-9-O-acetylneuraminic acid, which is probably the receptor determinant recognized by the virus on the surface of erythrocytes and susceptible cells. This receptor-destroying activity is important for virus release as it probably helps preventing self-aggregation and ensures the efficient spread of the progeny virus from cell to cell. May serve as a secondary viral attachment protein for initiating infection, the spike protein being the major one. Seems to be a 'luxury' protein that is not absolutely necessary for virus infection in culture. However, its presence in the virus may alter its pathogenicity. May become a target for both the humoral and the cellular branches of the immune system. This Homo sapiens (Human) protein is Hemagglutinin-esterase (HE).